A 66-amino-acid polypeptide reads, in one-letter code: ARDAYIAKPHNCVYECYNPKGSYCNDLCTENGAESGYCQILGKYGNACWCIQLPDNVPIRIPGKCH.

Positions 2–66 (RDAYIAKPHN…VPIRIPGKCH (65 aa)) constitute an LCN-type CS-alpha/beta domain. Cystine bridges form between cysteine 12-cysteine 65, cysteine 16-cysteine 38, cysteine 24-cysteine 48, and cysteine 28-cysteine 50.

Belongs to the long (4 C-C) scorpion toxin superfamily. Sodium channel inhibitor family. Alpha subfamily. In terms of tissue distribution, expressed by the venom gland.

Its subcellular location is the secreted. Its function is as follows. Alpha toxins bind voltage-independently at site-3 of sodium channels (Nav) and inhibit the inactivation of the activated channels, thereby blocking neuronal transmission. This toxin is active on both mammals and insects, since it inhibits inactivation of rNav1.4/SCN4A, hNav1.5/SCN5A, mNav1.6/SCN8A and insect BgNav1 and DmNav1 channels. In vivo, it shows paralytic activity in mice. The polypeptide is Alpha-like toxin BeM9 (Mesobuthus eupeus (Lesser Asian scorpion)).